A 139-amino-acid chain; its full sequence is D-ribose pyranase (139 aa).

His20 functions as the Proton donor in the catalytic mechanism. Substrate-binding positions include Asp28, His106, and 128-130; that span reads YAN.

Belongs to the RbsD / FucU family. RbsD subfamily. As to quaternary structure, homodecamer.

It is found in the cytoplasm. The enzyme catalyses beta-D-ribopyranose = beta-D-ribofuranose. It functions in the pathway carbohydrate metabolism; D-ribose degradation; D-ribose 5-phosphate from beta-D-ribopyranose: step 1/2. Catalyzes the interconversion of beta-pyran and beta-furan forms of D-ribose. In Escherichia coli O45:K1 (strain S88 / ExPEC), this protein is D-ribose pyranase.